The sequence spans 1033 residues: Error-prone DNA polymerase (1033 aa).

This sequence belongs to the DNA polymerase type-C family. DnaE2 subfamily.

The protein resides in the cytoplasm. It catalyses the reaction DNA(n) + a 2'-deoxyribonucleoside 5'-triphosphate = DNA(n+1) + diphosphate. Its function is as follows. DNA polymerase involved in damage-induced mutagenesis and translesion synthesis (TLS). It is not the major replicative DNA polymerase. The protein is Error-prone DNA polymerase of Teredinibacter turnerae (strain ATCC 39867 / T7901).